Reading from the N-terminus, the 208-residue chain is A-type ATP synthase subunit E (208 aa).

This sequence belongs to the V-ATPase E subunit family. In terms of assembly, has multiple subunits with at least A(3), B(3), C, D, E, F, H, I and proteolipid K(x).

The protein localises to the cell membrane. In terms of biological role, component of the A-type ATP synthase that produces ATP from ADP in the presence of a proton gradient across the membrane. The protein is A-type ATP synthase subunit E of Ignicoccus hospitalis (strain KIN4/I / DSM 18386 / JCM 14125).